We begin with the raw amino-acid sequence, 306 residues long: Nucleotide-binding protein amb4396 (306 aa).

The span at Met-1–Ala-14 shows a compositional bias: polar residues. A disordered region spans residues Met-1 to Gly-20. Gly-29–Thr-36 is a binding site for ATP. Position 77-80 (Asp-77–Thr-80) interacts with GTP.

Belongs to the RapZ-like family.

Displays ATPase and GTPase activities. This Paramagnetospirillum magneticum (strain ATCC 700264 / AMB-1) (Magnetospirillum magneticum) protein is Nucleotide-binding protein amb4396.